The sequence spans 474 residues: MKMTLPDFHCAEVLVVGDVMLDRYWYGPTSRISPEAPVPVVKVNTIEERPGGAANVAMNIAALGANSHLIGLTGIDDAAHALSEKLRSVKVRCDFVSVPTHPTVTKLRVLSRNQQLIRLDFEEGFDNVDAQPMFERIEQALPHIGALVLSDYAKGALSQVQEMIKLANAAKVPVLIDPKGNDFERYRGATLLTPNLSEFEAVVGHCKDDNELVEKGTRLVKGLDLQALLITRSEQGMSLLSVDQPPLHLPTQAQEVFDVTGAGDTVIGVLATAIAAGKPLNEACFLANAAAGVVVGKLGTSTVSPIELENAIRGRAETGFGVMTEFQLKQAVVDARQRGERVVMTNGCFDILHAGHVSYLENARRLGDRLIVAVNSDASTKRLKGESRPVNPLEQRMIVLSALGAVDWVVPFEEDTPQRLIADVLPDVLVKGGDYKPEEIAGSEEVWAAGGDVKVLNFEDGISTTNIIKAIKNQ.

The tract at residues 1–318 is ribokinase; that stretch reads MKMTLPDFHC…ENAIRGRAET (318 aa). Residue 195–198 participates in ATP binding; it reads NLSE. Asp-264 is a catalytic residue. Residues 344–474 are cytidylyltransferase; it reads MTNGCFDILH…TNIIKAIKNQ (131 aa).

It in the N-terminal section; belongs to the carbohydrate kinase PfkB family. In the C-terminal section; belongs to the cytidylyltransferase family. As to quaternary structure, homodimer.

It catalyses the reaction D-glycero-beta-D-manno-heptose 7-phosphate + ATP = D-glycero-beta-D-manno-heptose 1,7-bisphosphate + ADP + H(+). The enzyme catalyses D-glycero-beta-D-manno-heptose 1-phosphate + ATP + H(+) = ADP-D-glycero-beta-D-manno-heptose + diphosphate. It participates in nucleotide-sugar biosynthesis; ADP-L-glycero-beta-D-manno-heptose biosynthesis; ADP-L-glycero-beta-D-manno-heptose from D-glycero-beta-D-manno-heptose 7-phosphate: step 1/4. It functions in the pathway nucleotide-sugar biosynthesis; ADP-L-glycero-beta-D-manno-heptose biosynthesis; ADP-L-glycero-beta-D-manno-heptose from D-glycero-beta-D-manno-heptose 7-phosphate: step 3/4. Its pathway is bacterial outer membrane biogenesis; LPS core biosynthesis. Its function is as follows. Catalyzes the phosphorylation of D-glycero-D-manno-heptose 7-phosphate at the C-1 position to selectively form D-glycero-beta-D-manno-heptose-1,7-bisphosphate. In terms of biological role, catalyzes the ADP transfer from ATP to D-glycero-beta-D-manno-heptose 1-phosphate, yielding ADP-D-glycero-beta-D-manno-heptose. The protein is Bifunctional protein HldE of Photorhabdus laumondii subsp. laumondii (strain DSM 15139 / CIP 105565 / TT01) (Photorhabdus luminescens subsp. laumondii).